A 299-amino-acid polypeptide reads, in one-letter code: Leucine zipper transcription factor-like protein 1 (299 aa).

A coiled-coil region spans residues 96 to 296 (LKLQTDISEL…DLRKRLAKYE (201 aa)). Residues 145–299 (GAAELLNKEI…KRLAKYEPED (155 aa)) are interaction with BSS9.

The protein belongs to the LZTFL1 family. Self-associates. Interacts with BBS9; the interaction mediates the association of LZTL1 with the BBsome complex and regulates BBSome ciliary trafficking.

The protein resides in the cytoplasm. Its function is as follows. Regulates ciliary localization of the BBSome complex. Together with the BBSome complex, controls SMO ciliary trafficking and contributes to the sonic hedgehog (SHH) pathway regulation. May play a role in neurite outgrowth. May have tumor suppressor function. The chain is Leucine zipper transcription factor-like protein 1 (LZTFL1) from Bos taurus (Bovine).